Reading from the N-terminus, the 5762-residue chain is MGAPSACRTLVLALAAMLVVPQAETQGPVEPSWENAGHTMDGGAPTSSPTRRVSFVPPVTVFPSLSPLNPAHNGRVCSTWGDFHYKTFDGDVFRFPGLCNYVFSEHCRAAYEDFNVQLRRGLVGSRPVVTRVVIKAQGLVLEASNGSVLINGQREELPYSRTGLLVEQSGDYIKVSIRLVLTFLWNGEDSALLELDPKYANQTCGLCGDFNGLPAFNEFYAHNARLTPLQFGNLQKLDGPTEQCPDPLPLPAGNCTDEEGICHRTLLGPAFAECHALVDSTAYLAACAQDLCRCPTCPCATFVEYSRQCAHAGGQPRNWRCPELCPRTCPLNMQHQECGSPCTDTCSNPQRAQLCEDHCVDGCFCPPGTVLDDITHSGCLPLGQCPCTHGGRTYSPGTSFNTTCSSCTCSGGLWQCQDLPCPGTCSVQGGAHISTYDEKLYDLHGDCSYVLSKKCADSSFTVLAELRKCGLTDNENCLKAVTLSLDGGDTAIRVQADGGVFLNSIYTQLPLSAANITLFTPSSFFIVVQTGLGLQLLVQLVPLMQVFVRLDPAHQGQMCGLCGNFNQNQADDFTALSGVVEATGAAFANTWKAQAACANARNSFEDPCSLSVENENYARHWCSRLTDPNSAFSRCHSIINPKPFHSNCMFDTCNCERSEDCLCAALSSYVHACAAKGVQLSDWRDGVCTKYMQNCPKSQRYAYVVDACQPTCRGLSEADVTCSVSFVPVDGCTCPAGTFLNDAGACVPAQECPCYAHGTVLAPGEVVHDEGAVCSCTGGKLSCLGASLQKSTGCAAPMVYLDCSNSSAGTPGAECLRSCHTLDVGCFSTHCVSGCVCPPGLVSDGSGGCIAEEDCPCVHNEATYKPGETIRVDCNTCTCRNRRWECSHRLCLGTCVAYGDGHFITFDGDRYSFEGSCEYILAQDYCGDNTTHGTFRIVTENIPCGTTGTTCSKAIKLFVESYELILQEGTFKAVARGPGGDPPYKIRYMGIFLVIETHGMAVSWDRKTSVFIRLHQDYKGRVCGLCGNFDDNAINDFATRSRSVVGDALEFGNSWKLSPSCPDALAPKDPCTANPFRKSWAQKQCSILHGPTFAACRSQVDSTKYYEACVNDACACDSGGDCECFCTAVAAYAQACHDAGLCVSWRTPDTCPLFCDFYNPHGGCEWHYQPCGAPCLKTCRNPSGHCLVDLPGLEGCYPKCPPSQPFFNEDQMKCVAQCGCYDKDGNYYDVGARVPTAENCQSCNCTPSGIQCAHSLEACTCTYEDRTYSYQDVIYNTTDGLGACLIAICGSNGTIIRKAVACPGTPATTPFTFTTAWVPHSTTSPALPVSTVCVREVCRWSSWYNGHRPEPGLGGGDFETFENLRQRGYQVCPVLADIECRAAQLPDMPLEELGQQVDCDRMRGLMCANSQQSPPLCHDYELRVLCCEYVPCGPSPAPGTSPQPSLSASTEPAVPTPTQTTATEKTTLWVTPSIRSTAALTSQTGSSSGPVTVTPSAPGTTTCQPRCQWTEWFDEDYPKSEQLGGDVESYDKIRAAGGHLCQQPKDIECQAESFPNWTLAQVGQKVHCDVHFGLVCRNWEQEGVFKMCYNYRIRVLCCSDDHCRGRATTPPPTTELETATTTTTQALFSTPQPTSSPGLTRAPPASTTAVPTLSEGLTSPRYTSTLGTATTGGPTTPAGSTEPTVPGVATSTLPTRSALPGTTGSLGTWRPSQPPTLAPTTMATSRARPTGTASTASKEPLTTSLAPTLTSELSTSQAETSTPRTETTMSPLTNTTTSQGTTRCQPKCEWTEWFDVDFPTSGVAGGDMETFENIRAAGGKMCWAPKSIECRAENYPEVSIDQVGQVLTCSLETGLTCKNEDQTGRFNMCFNYNVRVLCCDDYSHCPSTPATSSTATPSSTPGTTWILTKPTTTATTTASTGSTATPTSTLRTAPPPKVLTTTATTPTVTSSKATPSSSPGTATALPALRSTATTPTATSVTPIPSSSLGTTWTRLSQTTTPTATMSTATPSSTPETAHTSTVLTATATTTGATGSVATPSSTPGTAHTTKVPTTTTTGFTATPSSSPGTALTPPVWISTTTTPTTRGSTVTPSSIPGTTHTATVLTTTTTTVATGSMATPSSSTQTSGTPPSLTTTATTITATGSTTNPSSTPGTTPIPPVLTTTATTPAATSNTVTPSSALGTTHTPPVPNTMATTHGRSLPPSSPHTVRTAWTSATSGILGTTHITEPSTVTSHTLAATTGTTQHSTPALSSPHPSSRTTESPPSPGTTTPGHTTATSRTTATATPSKTRTSTLLPSSPTSAPITTVVTMGCEPQCAWSEWLDYSYPMPGPSGGDFDTYSNIRAAGGAVCEQPLGLECRAQAQPGVPLRELGQVVECSLDFGLVCRNREQVGKFKMCFNYEIRVFCCNYGHCPSTPATSSTAMPSSTPGTTWILTELTTTATTTESTGSTATPSSTPGTTWILTEPSTTATVTVPTGSTATASSTQATAGTPHVSTTATTPTVTSSKATPFSSPGTATALPALRSTATTPTATSFTAIPSSSLGTTWTRLSQTTTPTATMSTATPSSTPETVHTSTVLTTTATTTGATGSVATPSSTPGTAHTTKVLTTTTTGFTATPSSSPGTARTLPVWISTTTTPTTRGSTVTPSSIPGTTHTPTVLTTTTTTVATGSMATPSSSTQTSGTPPSLTTTATTITATGSTTNPSSTPGTTPIPPVLTTTATTPAATSSTVTPSSALGTTHTPPVPNTTATTHGRSLSPSSPHTVRTAWTSATSGTLGTTHITEPSTGTSHTPAATTGTTQHSTPALSSPHPSSRTTESPPSPGTTTPGHTRATSRTTATATPSKTRTSTLLPSSPTSAPITTVVTMGCEPQCAWSEWLDYSYPMPGPSGGDFDTYSNIRAAGGAVCEQPLGLECRAQAQPGVPLRELGQVVECSLDFGLVCRNREQVGKFKMCFNYEIRVFCCNYGHCPSTPATSSTATPSSTPGTTWILTEQTTAATTTATTGSTAIPSSTPGTAPPPKVLTSTATTPTATSSKATSSSSPRTATTLPVLTSTATKSTATSFTPIPSFTLGTTGTLPEQTTTPMATMSTIHPSSTPETTHTSTVLTTKATTTRATSSMSTPSSTPGTTWILTELTTAATTTAATGPTATPSSTPGTTWILTEPSTTATVTVPTGSTATASSTRATAGTLKVLTSTATTPTVISSRATPSSSPGTATALPALRSTATTPTATSVTAIPSSSLGTAWTRLSQTTTPTATMSTATPSSTPETVHTSTVLTTTTTTTRATGSVATPSSTPGTAHTTKVPTTTTTGFTATPSSSPGTALTPPVWISTTTTPTTRGSTVTPSSIPGTTHTATVLTTTTTTVATGSMATPSSSTQTSGTPPSLTTTATTITATGSTTNPSSTPGTTPIPPVLTTTATTPAATSSTVTPSSALGTTHTPPVPNTTATTHGRSLPPSSPHTVRTAWTSATSGILGTTHITEPSTVTSHTPAATTSTTQHSTPALSSPHPSSRTTESPPSPGTTTPGHTRGTSRTTATATPSKTRTSTLLPSSPTSAPITTVVTTGCEPQCAWSEWLDYSYPMPGPSGGDFDTYSNIRAAGGAVCEQPLGLECRAQAQPGVPLRELGQVVECSLDFGLVCRNREQVGKFKMCFNYEIRVFCCNYGHCPSTPATSSTATPSSTPGTTWILTKLTTTATTTESTGSTATPSSTPGTTWILTEPSTTATVTVPTGSTATASSTQATAGTPHVSTTATTPTVTSSKATPFSSPGTATALPALRSTATTPTATSFTAIPSSSLGTTWTRLSQTTTPTATMSTATPSSTPETAHTSTVLTTTATTTRATGSVATPSSTPGTAHTTKVPTTTTTGFTVTPSSSPGTARTPPVWISTTTTPTTSGSTVTPSSVPGTTHTPTVLTTTTTTVATGSMATPSSSTQTSGTPPSLITTATTITATGSTTNPSSTPGTTPIPPVLTTTATTPAATSSTVTPSSALGTTHTPPVPNTTATTHGRSLSPSSPHTVRTAWTSATSGTLGTTHITEPSTGTSHTPAATTGTTQHSTPALSSPHPSSRTTESPPSPGTTTPGHTTATSRTTATATPSKTRTSTLLPSSPTSAPITTVVTTGCEPQCAWSEWLDYSYPMPGPSGGDFDTYSNIRAAGGAVCEQPLGLECRAQAQPGVPLGELGQVVECSLDFGLVCRNREQVGKFKMCFNYEIRVFCCNYGHCPSTPATSSTAMPSSTPGTTWILTELTTTATTTASTGSTATPSSTPGTAPPPKVLTSPATTPTATSSKATSSSSPRTATTLPVLTSTATKSTATSVTPIPSSTLGTTGTLPEQTTTPVATMSTIHPSSTPETTHTSTVLTTKATTTRATSSTSTPSSTPGTTWILTELTTAATTTAATGPTATPSSTPGTTWILTELTTTATTTASTGSTATPSSTPGTTWILTEPSTTATVTVPTGSTATASSTQATAGTPHVSTTATTPTVTSSKATPSSSPGTATALPALRSTATTPTATSFTAIPSSSLGTTWTRLSQTTTPTATMSTATPSSTPETVHTSTVLTATATTTGATGSVATPSSTPGTAHTTKVPTTTTTGFTATPSSSPGTALTPPVWISTTTTPTTTTPTTSGSTVTPSSIPGTTHTARVLTTTTTTVATGSMATPSSSTQTSGTPPSLTTTATTITATGSTTNPSSTPGTTPITPVLTSTATTPAATSSKATSSSSPRTATTLPVLTSTATKSTATSFTPIPSSTLWTTWTVPAQTTTPMSTMSTIHTSSTPETTHTSTVLTTTATMTRATNSTATPSSTLGTTRILTELTTTATTTAATGSTATLSSTPGTTWILTEPSTIATVMVPTGSTATASSTLGTAHTPKVVTTMATMPTATASTVPSSSTVGTTRTPAVLPSSLPTFSVSTVSSSVLTTLRPTGFPSSHFSTPCFCRAFGQFFSPGEVIYNKTDRAGCHFYAVCNQHCDIDRFQGACPTSPPPVSSAPLSSPSPAPGCDNAIPLRQVNETWTLENCTVARCVGDNRVVLLDPKPVANVTCVNKHLPIKVSDPSQPCDFHYECECICSMWGGSHYSTFDGTSYTFRGNCTYVLMREIHARFGNLSLYLDNHYCTASATAAAARCPRALSIHYKSMDIVLTVTMVHGKEEGLILFDQIPVSSGFSKNGVLVSVLGTTTMRVDIPALGVSVTFNGQVFQARLPYSLFHNNTEGQCGTCTNNQRDDCLQRDGTTAASCKDMAKTWLVPDSRKDGCWAPTGTPPTASPAAPVSSTPTPTPCPPQPLCDLMLSQVFAECHNLVPPGPFFNACISDHCRGRLEVPCQSLEAYAELCRARGVCSDWRGATGGLCDLTCPPTKVYKPCGPIQPATCNSRNQSPQLEGMAEGCFCPEDQILFNAHMGICVQACPCVGPDGFPKFPGERWVSNCQSCVCDEGSVSVQCKPLPCDAQGQPPPCNRPGFVTVTRPRAENPCCPETVCVCNTTTCPQSLPVCPPGQESICTQEEGDCCPTFRCRPQLCSYNGTFYGVGATFPGALPCHMCTCLSGDTQDPTVQCQEDACNNTTCPQGFEYKRVAGQCCGECVQTACLTPDGQPVQLNETWVNSHVDNCTVYLCEAEGGVHLLTPQPASCPDVSSCRGSLRKTGCCYSCEEDSCQVRINTTILWHQGCETEVNITFCEGSCPGASKYSAEAQAMQHQCTCCQERRVHEETVPLHCPNGSAILHTYTHVDECGCTPFCVPAPMAPPHTRGFPAQEATAV.

The first 25 residues, 1–25 (MGAPSACRTLVLALAAMLVVPQAET), serve as a signal peptide directing secretion. A disordered region spans residues 27–50 (GPVEPSWENAGHTMDGGAPTSSPT). Residues 75–245 (RVCSTWGDFH…KLDGPTEQCP (171 aa)) enclose the VWFD 1 domain. Intrachain disulfides connect C77/C207 and C99/C244. Residue N145 is glycosylated (N-linked (GlcNAc...) asparagine). E194 provides a ligand contact to Cu(2+). N201 and N254 each carry an N-linked (GlcNAc...) asparagine glycan. Cu(2+) is bound by residues H311 and H358. A TIL 1 domain is found at 329–385 (CPLNMQHQECGSPCTDTCSNPQRAQLCEDHCVDGCFCPPGTVLDDITHSGCLPLGQC). A glycan (N-linked (GlcNAc...) asparagine) is linked at N401. In terms of domain architecture, VWFD 2 spans 423–598 (GTCSVQGGAH…NTWKAQAACA (176 aa)). 3 disulfide bridges follow: C425-C562, C447-C597, and C469-C477. N515 is a glycosylation site (N-linked (GlcNAc...) asparagine). TIL domains lie at 695-752 (CPKS…AQEC) and 805-855 (NSSA…EEDC). N-linked (GlcNAc...) asparagine glycosylation is present at N805. The VWFC 1 domain occupies 855-927 (CPCVHNEATY…EYILAQDYCG (73 aa)). The VWFD 3 domain occupies 893–1062 (GTCVAYGDGH…NSWKLSPSCP (170 aa)). Cystine bridges form between C895-C1026, C917-C1061, C926-C1023, and C944-C951. A glycan (N-linked (GlcNAc...) asparagine) is linked at N929. N-linked (GlcNAc...) asparagine glycosylation is found at N1276 and N1292. Residues 1333 to 1432 (CVREVCRWSS…RVLCCEYVPC (100 aa)) form a Cys-rich subdomain 1 repeat. Positions 1333-4228 (CVREVCRWSS…RVFCCNYGHC (2896 aa)) are 7 X Cys-rich subdomain repeats. Residue W1340 is glycosylated (C-linked (Man) tryptophan). Disordered regions lie at residues 1437–1462 (APGT…QTTA) and 1480–1502 (LTSQ…GTTT). Residues 1450 to 1462 (TEPAVPTPTQTTA) show a composition bias toward low complexity. One copy of the Cys-rich subdomain 2 repeat lies at 1503–1604 (CQPRCQWTEW…VLCCSDDHCR (102 aa)). C-linked (Man) tryptophan glycosylation occurs at W1509. N1556 is a glycosylation site (N-linked (GlcNAc...) asparagine). Residues 1607–1783 (ATTPPPTTEL…NTTTSQGTTR (177 aa)) form a disordered region. Over residues 1614-1624 (TELETATTTTT) the composition is skewed to low complexity. Composition is skewed to polar residues over residues 1625–1638 (QALF…SSPG) and 1645–1662 (ASTT…SPRY). The span at 1663–1684 (TSTLGTATTGGPTTPAGSTEPT) shows a compositional bias: low complexity. The segment covering 1689-1706 (ATSTLPTRSALPGTTGSL) has biased composition (polar residues). 2 stretches are compositionally biased toward low complexity: residues 1739 to 1756 (EPLT…LSTS) and 1765 to 1777 (TETT…NTTT). N1774 carries N-linked (GlcNAc...) asparagine glycosylation. One copy of the Cys-rich subdomain 3 repeat lies at 1784-1885 (CQPKCEWTEW…VLCCDDYSHC (102 aa)). W1790 carries a C-linked (Man) tryptophan glycan. Low complexity predominate over residues 1890–1987 (ATSSTATPSS…TSVTPIPSSS (98 aa)). 4 disordered regions span residues 1890 to 2019 (ATSS…TAHT), 2031 to 2100 (GATG…GTTH), 2114 to 2211 (TGSM…HTVR), and 2242 to 2302 (TGTT…SSPT). The 11 X approximate tandem repeats, Ser/Thr-rich stretch occupies residues 1890–2199 (ATSSTATPSS…VPNTMATTHG (310 aa)). Residues 1988–1997 (LGTTWTRLSQ) are compositionally biased toward polar residues. The span at 1998–2019 (TTTPTATMSTATPSSTPETAHT) shows a compositional bias: low complexity. Residues 2114 to 2181 (TGSMATPSSS…TSNTVTPSSA (68 aa)) are compositionally biased toward low complexity. Positions 2182-2199 (LGTTHTPPVPNTMATTHG) are enriched in polar residues. The Cys-rich subdomain 4 repeat unit spans residues 2313–2414 (GCEPQCAWSE…RVFCCNYGHC (102 aa)). W2320 carries C-linked (Man) tryptophan glycosylation. Residues 2419 to 2756 (ATSSTAMPSS…VPNTTATTHG (338 aa)) form an 11 X approximate tandem repeats, Ser/Thr-rich region. Disordered stretches follow at residues 2443-2462 (ATTT…PGTT), 2473-2522 (TVTV…ATAL), and 2556-2861 (TTPT…PTSA). Over residues 2556 to 2738 (TTPTATMSTA…TSSTVTPSSA (183 aa)) the composition is skewed to low complexity. The segment covering 2739–2786 (LGTTHTPPVPNTTATTHGRSLSPSSPHTVRTAWTSATSGTLGTTHITE) has biased composition (polar residues). N2749 carries an N-linked (GlcNAc...) asparagine glycan. Over residues 2787–2861 (PSTGTSHTPA…TLLPSSPTSA (75 aa)) the composition is skewed to low complexity. The HAT 1 repeat unit spans residues 2854 to 2886 (LPSSPTSAPITTVVTMGCEPQCAWSEWLDYSYP). Residues 2871 to 2971 (CEPQCAWSEW…RVFCCNYGHC (101 aa)) form a Cys-rich subdomain 5 repeat. The C-linked (Man) tryptophan glycan is linked to W2877. Positions 2976 to 3456 (ATSSTATPSS…VPNTTATTHG (481 aa)) are 17 X approximate tandem repeats, Ser/Thr-rich. Composition is skewed to low complexity over residues 3001–3017 (TTTA…STPG) and 3026–3049 (TSTA…RTAT). Disordered regions lie at residues 3001 to 3049 (TTTA…RTAT), 3256 to 3357 (TTPT…GTTH), 3371 to 3469 (TGSM…TVRT), and 3481 to 3561 (TTHI…PTSA). Residues 3371 to 3438 (TGSMATPSSS…TSSTVTPSSA (68 aa)) show a composition bias toward low complexity. A compositionally biased stretch (polar residues) spans 3439-3456 (LGTTHTPPVPNTTATTHG). N3449 carries an N-linked (GlcNAc...) asparagine glycan. A compositionally biased stretch (low complexity) spans 3487–3561 (PSTVTSHTPA…TLLPSSPTSA (75 aa)). Residues 3554 to 3586 (LPSSPTSAPITTVVTTGCEPQCAWSEWLDYSYP) form an HAT 2 repeat. A Cys-rich subdomain 6 repeat occupies 3571–3671 (CEPQCAWSEW…RVFCCNYGHC (101 aa)). W3577 is a glycosylation site (C-linked (Man) tryptophan). The interval 3676–4013 (ATSSTATPSS…VPNTTATTHG (338 aa)) is 11 X approximate tandem repeats, Ser/Thr-rich. Disordered stretches follow at residues 3699–3779 (TATT…ATAL), 3813–3917 (TTPT…HTPT), and 3956–4118 (ATGS…PTSA). Over residues 3956 to 3995 (ATGSTTNPSSTPGTTPIPPVLTTTATTPAATSSTVTPSSA) the composition is skewed to low complexity. Residues 3996–4043 (LGTTHTPPVPNTTATTHGRSLSPSSPHTVRTAWTSATSGTLGTTHITE) are compositionally biased toward polar residues. An N-linked (GlcNAc...) asparagine glycan is attached at N4006. A compositionally biased stretch (low complexity) spans 4044–4118 (PSTGTSHTPA…TLLPSSPTSA (75 aa)). The stretch at 4111–4143 (LPSSPTSAPITTVVTTGCEPQCAWSEWLDYSYP) is one HAT 3 repeat. The Cys-rich subdomain 7 repeat unit spans residues 4128–4228 (CEPQCAWSEW…RVFCCNYGHC (101 aa)). Residue W4134 is glycosylated (C-linked (Man) tryptophan). The interval 4233–4879 (ATSSTAMPSS…TLGTAHTPKV (647 aa)) is 23 X approximate tandem repeats, Ser/Thr-rich. Composition is skewed to low complexity over residues 4259–4274 (TTAS…STPG) and 4283–4389 (TSPA…PGTT). Disordered regions lie at residues 4259-4389 (TTAS…PGTT), 4428-4447 (ATTT…PGTT), 4458-4527 (TVTV…AIPS), and 4541-4750 (TTPT…ATSF). N-linked (GlcNAc...) asparagine glycosylation is found at N4804, N4960, N5017, N5024, N5046, N5096, and N5111. Positions 5073-5261 (CICSMWGGSH…VPDSRKDGCW (189 aa)) constitute a VWFD 4 domain. Disulfide bonds link C5075–C5221, C5097–C5260, and C5121–C5132. An N-linked (GlcNAc...) asparagine glycan is attached at N5215. One can recognise a VWFC 2 domain in the interval 5412 to 5484 (CPCVGPDGFP…NPCCPETVCV (73 aa)). 9 N-linked (GlcNAc...) asparagine glycosylation sites follow: N5486, N5526, N5565, N5566, N5602, N5612, N5663, N5677, and N5721. Positions 5521–5587 (QLCSYNGTFY…VAGQCCGECV (67 aa)) constitute a VWFC 3 domain. 4 disulfides stabilise this stretch: C5653/C5705, C5672/C5719, C5681/C5735, and C5685/C5737. In terms of domain architecture, CTCK spans 5653–5742 (CEEDSCQVRI…DECGCTPFCV (90 aa)).

As to quaternary structure, homomultimer; disulfide-linked. The N- and C-terminus mediate their assembly into higher order structures to form filaments. The CTCK domains of two polypeptides associate in the endoplasmic reticulum to generate intermolecularly disulfide-bonded dimers. These dimers progress to the Golgi apparatus, which is a more acidic environment than the endoplasmic reticulum. Under acidic conditions, the N-termini form non-covalent intermolecular interactions that juxtapose assemblies from different CTCK-linked dimers to produce long, disulfide-linked polymers that remain highly compact until secretion. Highly glycosylated. C-, N- and O-glycosylated. C-mannosylated in the Cys-rich subdomains probably on the first Trp residue of the WXXW motif. Highly O-glycosylated in the Ser/Thr-rich tandem repeat (TR) region. The repeat region is about 59% O-glycosylated with a high abundance of NeuAc(2)Hex(1)HexNac1-ol. As to expression, expressed on surface airway epithelia. Expressed mainly in mucous cells of submucosal glands of airway tissues. Highly expressed in the sublingual gland. Also found in submaxillary glands, endocervix, gall bladder, and pancreas.

Its subcellular location is the secreted. Functionally, gel-forming mucin that is thought to contribute to the lubricating and viscoelastic properties of whole saliva and cervical mucus. The polypeptide is Mucin-5B (MUC5B) (Homo sapiens (Human)).